A 160-amino-acid polypeptide reads, in one-letter code: Glyoxalase domain-containing protein 5 (160 aa).

Residues 37 to 157 (RLDHIVMTVK…DRNLIEVSNY (121 aa)) enclose the VOC domain.

This sequence belongs to the glyoxalase I family.

The chain is Glyoxalase domain-containing protein 5 (GLOD5) from Homo sapiens (Human).